The sequence spans 151 residues: Large ribosomal subunit protein bL9 (151 aa).

This sequence belongs to the bacterial ribosomal protein bL9 family.

Functionally, binds to the 23S rRNA. The chain is Large ribosomal subunit protein bL9 from Mycolicibacterium vanbaalenii (strain DSM 7251 / JCM 13017 / BCRC 16820 / KCTC 9966 / NRRL B-24157 / PYR-1) (Mycobacterium vanbaalenii).